The chain runs to 146 residues: uncharacterized protein (146 aa).

The Glutaredoxin domain maps to 34–135 (EDKIVNDVMT…PLLEKAHALF (102 aa)). C54 lines the [2Fe-2S] cluster pocket.

Belongs to the glutaredoxin family. Monothiol subfamily.

This is an uncharacterized protein from Caenorhabditis elegans.